The chain runs to 347 residues: MSRPDSAVSLLPDYSLRAHNTFGFDARARVAARIGSPGQFASLARDPRVAGLDRLVLGGGSNVVFTRDFDGLVLLDEIRSRALVREDDGAWYVEAGGGENWHAFVEWTLAEGMPGLENLALIPGTVGAAPIQNIGAYGLEMKEHFASLRAVDLATGELVEFDAARCAFGYRDSFFKRDGRGRFAIVAVTFRLPKAWTPRIGYADVARELAARGIDARAARARDVFDAVVAIRRAKLPDPLALGNAGSFFKNPVIDAQAFAALRAREPDIVSYPQPDGRVKLAAGWLIDRCGWKGRALGAAAVHERQALVLVNLGGASGADVLALAHAIRRDVLGRFGVELEMEPVCL.

In terms of domain architecture, FAD-binding PCMH-type spans phenylalanine 24 to alanine 195. Arginine 171 is a catalytic residue. Serine 247 (proton donor) is an active-site residue. Residue glutamate 343 is part of the active site.

This sequence belongs to the MurB family. FAD serves as cofactor.

It is found in the cytoplasm. The catalysed reaction is UDP-N-acetyl-alpha-D-muramate + NADP(+) = UDP-N-acetyl-3-O-(1-carboxyvinyl)-alpha-D-glucosamine + NADPH + H(+). It participates in cell wall biogenesis; peptidoglycan biosynthesis. Cell wall formation. The chain is UDP-N-acetylenolpyruvoylglucosamine reductase from Burkholderia pseudomallei (strain 668).